The chain runs to 329 residues: Haptoglobin (329 aa).

Asn9 carries an N-linked (GlcNAc...) asparagine glycan. The Sushi domain occupies 13–70 (VSLPKPPVIENGYVEHMIRYQCKPFYKLHTEGDGVYTLNSEKHWTNKAVGEKLPECEA). 2 disulfides stabilise this stretch: Cys34/Cys68 and Cys72/Cys189. Residue Arg84 is a propeptide. The region spanning 85 to 327 (IMGGSVDAKG…VLAWVQETIA (243 aa)) is the Peptidase S1 domain. 2 N-linked (GlcNAc...) asparagine glycosylation sites follow: Asn107 and Asn214. 2 cysteine pairs are disulfide-bonded: Cys232–Cys263 and Cys274–Cys304. The interaction with CD163 stretch occupies residues 241-246 (VPEKKS).

Belongs to the peptidase S1 family. Tetramer of two alpha and two beta chains; disulfide-linked. The hemoglobin/haptoglobin complex is composed of a haptoglobin dimer bound to two hemoglobin alpha-beta dimers. Interacts with CD163. Interacts with ERGIC3. As to expression, expressed by the liver and secreted in plasma.

It localises to the secreted. Its subcellular location is the extracellular space. Functionally, as a result of hemolysis, hemoglobin is found to accumulate in the kidney and is secreted in the urine. Haptoglobin captures, and combines with free plasma hemoglobin to allow hepatic recycling of heme iron and to prevent kidney damage. Haptoglobin also acts as an antioxidant, has antibacterial activity and plays a role in modulating many aspects of the acute phase response. Hemoglobin/haptoglobin complexes are rapidly cleared by the macrophage CD163 scavenger receptor expressed on the surface of liver Kupfer cells through an endocytic lysosomal degradation pathway. This Canis lupus familiaris (Dog) protein is Haptoglobin (HP).